A 464-amino-acid polypeptide reads, in one-letter code: Heterogeneous nuclear ribonucleoprotein K (464 aa).

Met-1 carries the N-acetylmethionine modification. The tract at residues 1 to 37 (METEQPEETFPNTETNGEFGKRPAEDMEEEQAFKRSR) is disordered. The interval 1 to 276 (METEQPEETF…GRGGRPMPPS (276 aa)) is necessary for interaction with DDX1. Over residues 19 to 37 (FGKRPAEDMEEEQAFKRSR) the composition is skewed to basic and acidic residues. Lys-34 carries the post-translational modification N6-acetyllysine; alternate. Lys-34 is covalently cross-linked (Glycyl lysine isopeptide (Lys-Gly) (interchain with G-Cter in SUMO1); alternate). Residue Lys-34 forms a Glycyl lysine isopeptide (Lys-Gly) (interchain with G-Cter in SUMO2); alternate linkage. Ser-36 is subject to Phosphoserine. Position 39 is a phosphothreonine (Thr-39). The KH 1 domain occupies 42-104 (MVELRILLQS…ETIGEILKKI (63 aa)). Glycyl lysine isopeptide (Lys-Gly) (interchain with G-Cter in SUMO2) cross-links involve residues Lys-52 and Lys-60. Tandem repeats lie at residues 54–76 (AGAV…NASV) and 59–62 (GKGG). The interval 54-421 (AGAVIGKGGK…QIRHESGASI (368 aa)) is 2 X 22 AA approximate repeats. The interval 59–407 (GKGGKNIKAL…LAGSIIGKGG (349 aa)) is 5 X 4 AA repeats of G-X-G-G. Residues Ser-75 and Ser-116 each carry the phosphoserine modification. A KH 2 domain is found at 144-209 (DCELRLLIHQ…DRVVECIKII (66 aa)). Lys-163 participates in a covalent cross-link: Glycyl lysine isopeptide (Lys-Gly) (interchain with G-Cter in SUMO1); alternate. Lys-163 participates in a covalent cross-link: Glycyl lysine isopeptide (Lys-Gly) (interchain with G-Cter in SUMO2); alternate. Residue Lys-198 is modified to N6-acetyllysine. The interaction with ZIK1 stretch occupies residues 209 to 337 (ILDLISESPI…RPGDRYDGMV (129 aa)). Residues Ser-214 and Ser-216 each carry the phosphoserine modification. Lys-219 participates in a covalent cross-link: Glycyl lysine isopeptide (Lys-Gly) (interchain with G-Cter in SUMO2); alternate. Lys-219 is subject to N6-succinyllysine; alternate. The RNA-binding RGG-box stretch occupies residues 236–273 (YGGFTMMFDDRRGRPVGFPMRGRGGFDRMPPGRGGRPM). 3 tandem repeats follow at residues 245–250 (DRRGRP), 257–260 (GRGG), and 267–270 (GRGG). Residues 245-329 (DRRGRPVGFP…LMAYDRRGRP (85 aa)) are 2 X 6 AA approximate repeats. Residues 250-329 (PVGFPMRGRG…LMAYDRRGRP (80 aa)) are disordered. Residues 252-266 (GFPMRGRGGFDRMPP) show a composition bias toward low complexity. Basic and acidic residues predominate over residues 276–285 (SRRDYDDMSP). A Phosphoserine modification is found at Ser-284. The 3-4 repeat unit spans residues 295–298 (GRGG). Arg-316 carries the omega-N-methylarginine modification. Residues 324–329 (DRRGRP) form a 2-2 repeat. Omega-N-methylarginine is present on Arg-377. Ser-379 bears the Phosphoserine mark. Tyr-380 carries the post-translational modification Phosphotyrosine. Residues 387-451 (IITTQVTIPK…DQIQNAQYLL (65 aa)) enclose the KH 3 domain. A run of 2 repeats spans residues 399–421 (AGSI…GASI) and 404–407 (GKGG). Lys-405 is modified (N6-acetyllysine; alternate). Lys-405 is covalently cross-linked (Glycyl lysine isopeptide (Lys-Gly) (interchain with G-Cter in SUMO2); alternate). At Ser-420 the chain carries Phosphoserine. Lys-422 is covalently cross-linked (Glycyl lysine isopeptide (Lys-Gly) (interchain with G-Cter in SUMO1); alternate). Lys-422 participates in a covalent cross-link: Glycyl lysine isopeptide (Lys-Gly) (interchain with G-Cter in SUMO2); alternate. Residue Lys-422 forms a Glycyl lysine isopeptide (Lys-Gly) (interchain with G-Cter in SUMO); alternate linkage.

In terms of assembly, identified in the spliceosome C complex. Interacts with ANKRD28, RBM42 and ZIK1. Interacts with DDX1. Interacts with MDM2; this interaction leads to ubiquitination and proteasomal degradation. Interacts with p53/TP53. Interacts with BRDT. Interacts with IVNS1ABP. Interacts with PPIA/CYPA. Part of a transcription inhibitory ribonucleoprotein complex composed at least of the circular RNA circZNF827, ZNF827 and HNRNPL. Post-translationally, sumoylated by CBX4. Sumoylation is increased upon DNA damage, such as that produced by doxorubicin, etoposide, UV light and camptothecin, due to enhanced CBX4 phosphorylation by HIPK2 under these conditions. In terms of processing, ubiquitinated by MDM2. Doxorubicin treatment does not affect monoubiquitination, but slightly decreases HNRNPK poly-ubiquitination. O-glycosylated (O-GlcNAcylated), in a cell cycle-dependent manner.

The protein resides in the cytoplasm. The protein localises to the nucleus. It is found in the nucleoplasm. Its subcellular location is the cell projection. It localises to the podosome. One of the major pre-mRNA-binding proteins. Binds tenaciously to poly(C) sequences. Likely to play a role in the nuclear metabolism of hnRNAs, particularly for pre-mRNAs that contain cytidine-rich sequences. Can also bind poly(C) single-stranded DNA. Plays an important role in p53/TP53 response to DNA damage, acting at the level of both transcription activation and repression. When sumoylated, acts as a transcriptional coactivator of p53/TP53, playing a role in p21/CDKN1A and 14-3-3 sigma/SFN induction. As far as transcription repression is concerned, acts by interacting with long intergenic RNA p21 (lincRNA-p21), a non-coding RNA induced by p53/TP53. This interaction is necessary for the induction of apoptosis, but not cell cycle arrest. As part of a ribonucleoprotein complex composed at least of ZNF827, HNRNPL and the circular RNA circZNF827 that nucleates the complex on chromatin, may negatively regulate the transcription of genes involved in neuronal differentiation. In Bos taurus (Bovine), this protein is Heterogeneous nuclear ribonucleoprotein K (HNRNPK).